We begin with the raw amino-acid sequence, 400 residues long: Acetate kinase (400 aa).

N10 is a Mg(2+) binding site. K17 serves as a coordination point for ATP. Residue R91 participates in substrate binding. The active-site Proton donor/acceptor is the D150. ATP-binding positions include 210-214 (HLGNG), 285-287 (DCR), and 333-337 (GIGEN). E387 is a binding site for Mg(2+).

The protein belongs to the acetokinase family. As to quaternary structure, homodimer. It depends on Mg(2+) as a cofactor. Requires Mn(2+) as cofactor.

Its subcellular location is the cytoplasm. The catalysed reaction is acetate + ATP = acetyl phosphate + ADP. Its pathway is metabolic intermediate biosynthesis; acetyl-CoA biosynthesis; acetyl-CoA from acetate: step 1/2. Its function is as follows. Catalyzes the formation of acetyl phosphate from acetate and ATP. Can also catalyze the reverse reaction. This Pectobacterium carotovorum subsp. carotovorum (strain PC1) protein is Acetate kinase.